The sequence spans 211 residues: uncharacterized protein (211 aa).

Disordered regions lie at residues 45–74 (RSCG…GALS) and 147–211 (AETR…WEEP). Residues 48 to 71 (GRSSTGGCSPCSGPGPSSPRTSRG) show a composition bias toward low complexity. Polar residues predominate over residues 195 to 205 (DSGSIKMSENE).

This is an uncharacterized protein from Homo sapiens (Human).